The sequence spans 76 residues: Cytochrome c oxidase subunit 6C-1 (76 aa).

The Mitochondrial matrix portion of the chain corresponds to 4-14; that stretch reads GALLPKPQMHD. The chain crosses the membrane as a helical span at residues 15-55; the sequence is PLSKRLWVHIVGAFIVDLGVAAAHKFGAAKPRKKAYADFYR. The Mitochondrial intermembrane portion of the chain corresponds to 56–76; the sequence is NHDPMKDFDEMRKAGVFRSVK.

This sequence belongs to the cytochrome c oxidase subunit 6c family. Component of the cytochrome c oxidase (complex IV, CIV), a multisubunit enzyme composed of 14 subunits. The complex is composed of a catalytic core of 3 subunits MT-CO1, MT-CO2 and MT-CO3, encoded in the mitochondrial DNA, and 11 supernumerary subunits COX4I, COX5A, COX5B, COX6A, COX6B, COX6C, COX7A, COX7B, COX7C, COX8 and NDUFA4, which are encoded in the nuclear genome. The complex exists as a monomer or a dimer and forms supercomplexes (SCs) in the inner mitochondrial membrane with NADH-ubiquinone oxidoreductase (complex I, CI) and ubiquinol-cytochrome c oxidoreductase (cytochrome b-c1 complex, complex III, CIII), resulting in different assemblies (supercomplex SCI(1)III(2)IV(1) and megacomplex MCI(2)III(2)IV(2)).

It localises to the mitochondrion inner membrane. It participates in energy metabolism; oxidative phosphorylation. Functionally, component of the cytochrome c oxidase, the last enzyme in the mitochondrial electron transport chain which drives oxidative phosphorylation. The respiratory chain contains 3 multisubunit complexes succinate dehydrogenase (complex II, CII), ubiquinol-cytochrome c oxidoreductase (cytochrome b-c1 complex, complex III, CIII) and cytochrome c oxidase (complex IV, CIV), that cooperate to transfer electrons derived from NADH and succinate to molecular oxygen, creating an electrochemical gradient over the inner membrane that drives transmembrane transport and the ATP synthase. Cytochrome c oxidase is the component of the respiratory chain that catalyzes the reduction of oxygen to water. Electrons originating from reduced cytochrome c in the intermembrane space (IMS) are transferred via the dinuclear copper A center (CU(A)) of subunit 2 and heme A of subunit 1 to the active site in subunit 1, a binuclear center (BNC) formed by heme A3 and copper B (CU(B)). The BNC reduces molecular oxygen to 2 water molecules using 4 electrons from cytochrome c in the IMS and 4 protons from the mitochondrial matrix. The chain is Cytochrome c oxidase subunit 6C-1 (Cox6c1) from Rattus norvegicus (Rat).